A 345-amino-acid chain; its full sequence is Adenine deaminase (345 aa).

Residues histidine 24, histidine 26, and histidine 204 each contribute to the Zn(2+) site. The Proton donor role is filled by glutamate 207. Residue aspartate 285 coordinates Zn(2+). Aspartate 286 lines the substrate pocket.

Belongs to the metallo-dependent hydrolases superfamily. Adenosine and AMP deaminases family. Adenine deaminase type 2 subfamily. Requires Zn(2+) as cofactor.

The enzyme catalyses adenine + H2O + H(+) = hypoxanthine + NH4(+). Its function is as follows. Catalyzes the hydrolytic deamination of adenine to hypoxanthine. Plays an important role in the purine salvage pathway and in nitrogen catabolism. This Albidiferax ferrireducens (strain ATCC BAA-621 / DSM 15236 / T118) (Rhodoferax ferrireducens) protein is Adenine deaminase.